The following is a 251-amino-acid chain: Ubiquitin-conjugating enzyme E2 22 (251 aa).

Positions Asn-10–Lys-156 constitute a UBC core domain. Cys-94 (glycyl thioester intermediate) is an active-site residue. Basic and acidic residues predominate over residues Gly-230–Lys-240. The segment at Gly-230–Leu-251 is disordered. Residues Gly-230 to Leu-251 are a coiled coil. Over residues Val-241–Leu-251 the composition is skewed to basic residues.

It belongs to the ubiquitin-conjugating enzyme family. Self-ubiquitinated. As to expression, expressed in seeds, pistils, siliques, hypocotyls and leaves.

The catalysed reaction is S-ubiquitinyl-[E1 ubiquitin-activating enzyme]-L-cysteine + [E2 ubiquitin-conjugating enzyme]-L-cysteine = [E1 ubiquitin-activating enzyme]-L-cysteine + S-ubiquitinyl-[E2 ubiquitin-conjugating enzyme]-L-cysteine.. The protein operates within protein modification; protein ubiquitination. Functionally, accepts the ubiquitin from the E1 complex and catalyzes its covalent attachment to other proteins. The polypeptide is Ubiquitin-conjugating enzyme E2 22 (UBC22) (Arabidopsis thaliana (Mouse-ear cress)).